Consider the following 211-residue polypeptide: Pyridoxine/pyridoxamine 5'-phosphate oxidase (211 aa).

Residues 7 to 10 (RREY) and lysine 65 contribute to the substrate site. FMN is bound by residues 60–65 (RIVLLK), 75–76 (YT), arginine 81, lysine 82, and glutamine 104. Residues tyrosine 122, arginine 126, and serine 130 each contribute to the substrate site. FMN is bound by residues 139–140 (QS) and tryptophan 184. 190–192 (RLH) contributes to the substrate binding site. Arginine 194 provides a ligand contact to FMN.

It belongs to the pyridoxamine 5'-phosphate oxidase family. Homodimer. The cofactor is FMN.

It catalyses the reaction pyridoxamine 5'-phosphate + O2 + H2O = pyridoxal 5'-phosphate + H2O2 + NH4(+). The catalysed reaction is pyridoxine 5'-phosphate + O2 = pyridoxal 5'-phosphate + H2O2. The protein operates within cofactor metabolism; pyridoxal 5'-phosphate salvage; pyridoxal 5'-phosphate from pyridoxamine 5'-phosphate: step 1/1. It functions in the pathway cofactor metabolism; pyridoxal 5'-phosphate salvage; pyridoxal 5'-phosphate from pyridoxine 5'-phosphate: step 1/1. Catalyzes the oxidation of either pyridoxine 5'-phosphate (PNP) or pyridoxamine 5'-phosphate (PMP) into pyridoxal 5'-phosphate (PLP). The protein is Pyridoxine/pyridoxamine 5'-phosphate oxidase of Vibrio cholerae serotype O1 (strain ATCC 39315 / El Tor Inaba N16961).